Consider the following 594-residue polypeptide: DNA ligase (594 aa).

Residues 32–36, 81–82, and Glu-118 each bind NAD(+); these read DEEYD and SL. Lys-120 serves as the catalytic N6-AMP-lysine intermediate. NAD(+) is bound by residues Arg-141, Glu-181, Lys-299, and Lys-323. Residues Cys-417, Cys-420, Cys-436, and Cys-442 each coordinate Zn(2+).

It belongs to the NAD-dependent DNA ligase family. LigA subfamily. Mg(2+) is required as a cofactor. The cofactor is Mn(2+).

The catalysed reaction is NAD(+) + (deoxyribonucleotide)n-3'-hydroxyl + 5'-phospho-(deoxyribonucleotide)m = (deoxyribonucleotide)n+m + AMP + beta-nicotinamide D-nucleotide.. Functionally, DNA ligase that catalyzes the formation of phosphodiester linkages between 5'-phosphoryl and 3'-hydroxyl groups in double-stranded DNA using NAD as a coenzyme and as the energy source for the reaction. It is essential for DNA replication and repair of damaged DNA. The polypeptide is DNA ligase (Blochmanniella floridana).